Reading from the N-terminus, the 459-residue chain is Cysteine--tRNA ligase (459 aa).

Residue cysteine 29 coordinates Zn(2+). The 'HIGH' region signature appears at 31–41; sequence PTVYNLVHIGN. Zn(2+)-binding residues include cysteine 209, histidine 234, and glutamate 238. The 'KMSKS' region motif lies at 267-271; sequence KMSKS. An ATP-binding site is contributed by lysine 270.

This sequence belongs to the class-I aminoacyl-tRNA synthetase family. As to quaternary structure, monomer. Zn(2+) serves as cofactor.

Its subcellular location is the cytoplasm. It carries out the reaction tRNA(Cys) + L-cysteine + ATP = L-cysteinyl-tRNA(Cys) + AMP + diphosphate. The protein is Cysteine--tRNA ligase of Saccharophagus degradans (strain 2-40 / ATCC 43961 / DSM 17024).